The sequence spans 124 residues: Small ribosomal subunit protein uS12 (124 aa).

Aspartate 89 carries the 3-methylthioaspartic acid modification. The segment at 105-124 (QGVKNRKQARSRYGAKKEKS) is disordered. A compositionally biased stretch (basic residues) spans 108-118 (KNRKQARSRYG).

The protein belongs to the universal ribosomal protein uS12 family. In terms of assembly, part of the 30S ribosomal subunit. Contacts proteins S8 and S17. May interact with IF1 in the 30S initiation complex.

With S4 and S5 plays an important role in translational accuracy. In terms of biological role, interacts with and stabilizes bases of the 16S rRNA that are involved in tRNA selection in the A site and with the mRNA backbone. Located at the interface of the 30S and 50S subunits, it traverses the body of the 30S subunit contacting proteins on the other side and probably holding the rRNA structure together. The combined cluster of proteins S8, S12 and S17 appears to hold together the shoulder and platform of the 30S subunit. This Mycobacterium avium (strain 104) protein is Small ribosomal subunit protein uS12.